Here is a 774-residue protein sequence, read N- to C-terminus: Vezatin (774 aa).

2 helical membrane-spanning segments follow: residues 138 to 158 and 163 to 183; these read IATP…AVAA and SISS…FTVL. A coiled-coil region spans residues 430-457; that stretch reads VRSLQLHLKALLNEVIVLEDELDKLSSC. Residues 746–757 show a composition bias toward acidic residues; it reads FGDEWDDDDDNE. The tract at residues 746–774 is disordered; it reads FGDEWDDDDDNEDHDHDKERNNDSSQLEG. The segment covering 758–767 has biased composition (basic and acidic residues); it reads DHDHDKERNN.

It belongs to the vezatin family. Interacts with myosin VIIa and the cadherin-catenins complex.

The protein localises to the cell membrane. It is found in the cell junction. Its subcellular location is the adherens junction. It localises to the nucleus. Plays a pivotal role in the establishment of adherens junctions and their maintenance in adult life. The polypeptide is Vezatin (vezt) (Xenopus laevis (African clawed frog)).